Here is a 90-residue protein sequence, read N- to C-terminus: uncharacterized protein (90 aa).

A disordered region spans residues 1–26 (MFKRSVSRLFCAPAPAPAPRKQPGGR). A coiled-coil region spans residues 33–66 (NLNQSVKKQLNHLEVLERIKKQRKEQKNNRNQVD).

This is an uncharacterized protein from Dictyostelium discoideum (Social amoeba).